Consider the following 263-residue polypeptide: MARGPKKHLKRLNAPKAWMLDKLGGVYAPRPSTGPHKLRECLPLVIFLRNRLKYALTGNEVLKIVKQRLIKVDGKVRTDPTYPAGFMDVVSIEKTNELFRLIYDVKGRFTIHRITPEEAKYKLCKVKRVATGPKNVPYLVTHDGRTIRYPDPLIKVNDSIQLDIATTKIMDFIKFESGNLCMITGGRNLGRVGTIVSRERHPGSFDIVHIKDSTGHTFATRLNNVFIIGKGTKAYISLPRGKGIRLTIAEERDKRIAAKVAAQ.

Residues 42–104 (LPLVIFLRNR…TNELFRLIYD (63 aa)) form the S4 RNA-binding domain.

It belongs to the eukaryotic ribosomal protein eS4 family.

This Bombyx mori (Silk moth) protein is Small ribosomal subunit protein eS4 (RpS4).